The primary structure comprises 258 residues: Acyl-[acyl-carrier-protein]--UDP-N-acetylglucosamine O-acyltransferase (258 aa).

This sequence belongs to the transferase hexapeptide repeat family. LpxA subfamily. In terms of assembly, homotrimer.

The protein localises to the cytoplasm. It catalyses the reaction a (3R)-hydroxyacyl-[ACP] + UDP-N-acetyl-alpha-D-glucosamine = a UDP-3-O-[(3R)-3-hydroxyacyl]-N-acetyl-alpha-D-glucosamine + holo-[ACP]. It functions in the pathway glycolipid biosynthesis; lipid IV(A) biosynthesis; lipid IV(A) from (3R)-3-hydroxytetradecanoyl-[acyl-carrier-protein] and UDP-N-acetyl-alpha-D-glucosamine: step 1/6. In terms of biological role, involved in the biosynthesis of lipid A, a phosphorylated glycolipid that anchors the lipopolysaccharide to the outer membrane of the cell. This chain is Acyl-[acyl-carrier-protein]--UDP-N-acetylglucosamine O-acyltransferase, found in Myxococcus xanthus (strain DK1622).